The chain runs to 419 residues: Creatine kinase S-type, mitochondrial (419 aa).

The transit peptide at 1–39 (MASAFSKLLTGRNASLLFTTLGTSALTTGYLLNRQKVSA) directs the protein to the mitochondrion. Residues 40 to 64 (DAREQHKLFPPSADYPDLRKHNNCM) are cardiolipin-binding. In terms of domain architecture, Phosphagen kinase N-terminal spans 46–132 (KLFPPSADYP…FDPVIKLRHN (87 aa)). Residues 159 to 401 (YVLSSRVRTG…NYLVDCEKKL (243 aa)) enclose the Phosphagen kinase C-terminal domain. Residues 162–166 (SSRVR) and His-225 contribute to the ATP site. Tyr-255 is modified (phosphotyrosine). Residues Arg-270, Arg-326, 354–359 (RGTGGV), and Asp-369 each bind ATP. Thr-356 is modified (phosphothreonine).

The protein belongs to the ATP:guanido phosphotransferase family. As to quaternary structure, exists as an octamer composed of four CKMT2 homodimers. In terms of tissue distribution, sarcomere-specific. Found only in heart and skeletal muscles.

It localises to the mitochondrion inner membrane. It catalyses the reaction creatine + ATP = N-phosphocreatine + ADP + H(+). In terms of biological role, reversibly catalyzes the transfer of phosphate between ATP and various phosphogens (e.g. creatine phosphate). Creatine kinase isoenzymes play a central role in energy transduction in tissues with large, fluctuating energy demands, such as skeletal muscle, heart, brain and spermatozoa. The protein is Creatine kinase S-type, mitochondrial (Ckmt2) of Rattus norvegicus (Rat).